Here is a 119-residue protein sequence, read N- to C-terminus: Large ribosomal subunit protein bL20 (119 aa).

The protein belongs to the bacterial ribosomal protein bL20 family.

Binds directly to 23S ribosomal RNA and is necessary for the in vitro assembly process of the 50S ribosomal subunit. It is not involved in the protein synthesizing functions of that subunit. This Ruthia magnifica subsp. Calyptogena magnifica protein is Large ribosomal subunit protein bL20.